Here is a 218-residue protein sequence, read N- to C-terminus: Transaldolase (218 aa).

Catalysis depends on Lys83, which acts as the Schiff-base intermediate with substrate.

Belongs to the transaldolase family. Type 3B subfamily.

It localises to the cytoplasm. The catalysed reaction is D-sedoheptulose 7-phosphate + D-glyceraldehyde 3-phosphate = D-erythrose 4-phosphate + beta-D-fructose 6-phosphate. Its pathway is carbohydrate degradation; pentose phosphate pathway; D-glyceraldehyde 3-phosphate and beta-D-fructose 6-phosphate from D-ribose 5-phosphate and D-xylulose 5-phosphate (non-oxidative stage): step 2/3. Transaldolase is important for the balance of metabolites in the pentose-phosphate pathway. Does not show fructose-6-P aldolase activity. This chain is Transaldolase (tal), found in Thermotoga maritima (strain ATCC 43589 / DSM 3109 / JCM 10099 / NBRC 100826 / MSB8).